The sequence spans 395 residues: Subtilisin-like protease 9 (395 aa).

The signal sequence occupies residues 1-20 (MGFFRTLFSFSIFALSLADT). The propeptide occupies 21–120 (SKFIGLDDVD…ADRVVKMAAL (100 aa)). One can recognise an Inhibitor I9 domain in the interval 36 to 117 (SYIVVMKGAV…YVEADRVVKM (82 aa)). Positions 128–395 (SWGLGRISHK…RRLLYNGSGA (268 aa)) constitute a Peptidase S8 domain. Catalysis depends on charge relay system residues Asp-160 and His-191. The N-linked (GlcNAc...) asparagine glycan is linked to Asn-252. Catalysis depends on Ser-341, which acts as the Charge relay system. The N-linked (GlcNAc...) asparagine glycan is linked to Asn-391.

It belongs to the peptidase S8 family.

Its subcellular location is the secreted. Its function is as follows. Secreted subtilisin-like serine protease with keratinolytic activity that contributes to pathogenicity. The chain is Subtilisin-like protease 9 (SUB9) from Arthroderma otae (strain ATCC MYA-4605 / CBS 113480) (Microsporum canis).